The chain runs to 353 residues: S-adenosylmethionine:tRNA ribosyltransferase-isomerase (353 aa).

It belongs to the QueA family. In terms of assembly, monomer.

Its subcellular location is the cytoplasm. It catalyses the reaction 7-aminomethyl-7-carbaguanosine(34) in tRNA + S-adenosyl-L-methionine = epoxyqueuosine(34) in tRNA + adenine + L-methionine + 2 H(+). Its pathway is tRNA modification; tRNA-queuosine biosynthesis. In terms of biological role, transfers and isomerizes the ribose moiety from AdoMet to the 7-aminomethyl group of 7-deazaguanine (preQ1-tRNA) to give epoxyqueuosine (oQ-tRNA). The chain is S-adenosylmethionine:tRNA ribosyltransferase-isomerase from Nitrosomonas europaea (strain ATCC 19718 / CIP 103999 / KCTC 2705 / NBRC 14298).